Here is a 90-residue protein sequence, read N- to C-terminus: Small ribosomal subunit protein uS15c (90 aa).

This sequence belongs to the universal ribosomal protein uS15 family. Part of the 30S ribosomal subunit.

Its subcellular location is the plastid. It localises to the chloroplast. In Hordeum vulgare (Barley), this protein is Small ribosomal subunit protein uS15c (rps15-A).